Consider the following 382-residue polypeptide: D-galactonate dehydratase (382 aa).

Mg(2+) is bound at residue Asp-183. His-185 serves as the catalytic Proton donor. Mg(2+)-binding residues include Glu-209 and Glu-235. The active-site Proton acceptor is the His-285.

The protein belongs to the mandelate racemase/muconate lactonizing enzyme family. GalD subfamily. It depends on Mg(2+) as a cofactor.

The enzyme catalyses D-galactonate = 2-dehydro-3-deoxy-D-galactonate + H2O. It participates in carbohydrate acid metabolism; D-galactonate degradation; D-glyceraldehyde 3-phosphate and pyruvate from D-galactonate: step 1/3. Catalyzes the dehydration of D-galactonate to 2-keto-3-deoxy-D-galactonate. The chain is D-galactonate dehydratase from Klebsiella pneumoniae subsp. pneumoniae (strain ATCC 700721 / MGH 78578).